A 418-amino-acid chain; its full sequence is Tyrosine--tRNA ligase (418 aa).

Y38 serves as a coordination point for L-tyrosine. Positions 43 to 52 match the 'HIGH' region motif; it reads CTAKSLHVGS. The L-tyrosine site is built by Y175 and Q179. Residues 235–239 carry the 'KMSKS' region motif; sequence KMGKT. K238 provides a ligand contact to ATP. Residues 348–413 enclose the S4 RNA-binding domain; that stretch reads LPIIKLLQIS…CGKKRHLKIM (66 aa).

The protein belongs to the class-I aminoacyl-tRNA synthetase family. TyrS type 1 subfamily. As to quaternary structure, homodimer.

The protein localises to the cytoplasm. The enzyme catalyses tRNA(Tyr) + L-tyrosine + ATP = L-tyrosyl-tRNA(Tyr) + AMP + diphosphate + H(+). Catalyzes the attachment of tyrosine to tRNA(Tyr) in a two-step reaction: tyrosine is first activated by ATP to form Tyr-AMP and then transferred to the acceptor end of tRNA(Tyr). This is Tyrosine--tRNA ligase from Ehrlichia canis (strain Jake).